The chain runs to 133 residues: MSNNSVVYWGTGRRKTSVARVRLVPGNGTITINGRPGDNYLNYNPSYIAAVKAPLETLGLSSEYDILVNVHGGGLTGQSGAIKQGAARALCELSADNRKPLKTEGHLSRDPRAKERRKYGLKKARKAPQFSKR.

Residues 94–133 (SADNRKPLKTEGHLSRDPRAKERRKYGLKKARKAPQFSKR) are disordered. Residues 95-113 (ADNRKPLKTEGHLSRDPRA) show a composition bias toward basic and acidic residues. Residues 114–133 (KERRKYGLKKARKAPQFSKR) show a composition bias toward basic residues.

Belongs to the universal ribosomal protein uS9 family.

This Synechococcus sp. (strain CC9605) protein is Small ribosomal subunit protein uS9.